The primary structure comprises 197 residues: MATRGGPMVAGTDGNDFEFRQRVAGTYQISLLNKSRLKYCIFFHALLFFVMLAKLTSDILDRLDIFVLEIEELEVPSPLWWEYVWAGSLLTSFLGLSAARGNKVREMQKYMIAILVFAILPLLYCFAYYFSDVWEFATMDKSVELDETDIFIWRGYPYGVFWYAFCFVGFQVHGFTLYFAYNLVKVWKARTATRKFQ.

Residues 1–39 (MATRGGPMVAGTDGNDFEFRQRVAGTYQISLLNKSRLKY) lie on the Cytoplasmic side of the membrane. The helical transmembrane segment at 40-60 (CIFFHALLFFVMLAKLTSDIL) threads the bilayer. Residues 61–78 (DRLDIFVLEIEELEVPSP) are Lumenal-facing. A helical transmembrane segment spans residues 79 to 99 (LWWEYVWAGSLLTSFLGLSAA). Over 100-109 (RGNKVREMQK) the chain is Cytoplasmic. A helical transmembrane segment spans residues 110 to 130 (YMIAILVFAILPLLYCFAYYF). Topologically, residues 131–159 (SDVWEFATMDKSVELDETDIFIWRGYPYG) are lumenal. Residues 160 to 180 (VFWYAFCFVGFQVHGFTLYFA) form a helical membrane-spanning segment. At 181–197 (YNLVKVWKARTATRKFQ) the chain is on the cytoplasmic side.

This sequence belongs to the jagunal family.

The protein localises to the endoplasmic reticulum membrane. Required for endoplasmic reticulum organization and proper vesicular traffic during vitellogenesis. Required for oocyte and bristle growth. The sequence is that of Protein jagunal from Drosophila pseudoobscura pseudoobscura (Fruit fly).